Reading from the N-terminus, the 107-residue chain is Putative double-stranded DNA mimic protein PC1_1990 (107 aa).

It belongs to the putative dsDNA mimic protein family.

Functionally, may act as a double-stranded DNA (dsDNA) mimic. Probably regulates the activity of a dsDNA-binding protein. The protein is Putative double-stranded DNA mimic protein PC1_1990 of Pectobacterium carotovorum subsp. carotovorum (strain PC1).